Reading from the N-terminus, the 218-residue chain is Histone H1 (218 aa).

Low complexity-rich tracts occupy residues 1–19 (MSET…GAKA) and 27–39 (AAGG…PAGP). 2 disordered regions span residues 1-41 (MSET…GPSV) and 89-218 (VGKG…PKKK). At S2 the chain carries N-acetylserine. Positions 37-110 (AGPSVTELIT…GASGSFKLNK (74 aa)) constitute an H15 domain. Composition is skewed to basic residues over residues 119-133 (ATKK…KPAA), 141-158 (KKPK…KAKK), 166-184 (KAAK…KKAA), and 191-218 (KAVK…PKKK).

Belongs to the histone H1/H5 family.

It is found in the nucleus. The protein resides in the chromosome. Histones H1 are necessary for the condensation of nucleosome chains into higher-order structures. The protein is Histone H1 of Anas platyrhynchos (Mallard).